A 572-amino-acid polypeptide reads, in one-letter code: MSTISRQQYADLFGPTTGDKIRLGDTSLFVSIEKDLRTYGDEAVYGGGKTLRDGMGMDNELTSIGGAPDLLITNVTIIDAVLGVIKADVGIKDGRICGIGKAGNPSTMPGVTPSLAVGPATDAISGEHLILTAGGIDAHVHMISPQQAEAALSNGITTLFGGGLGPTDGTNGTTITSGTWNLEMMMRSFDALPINVGLLGKGNSSGMKPIVEQIEAGAAGLKVHEDWGSTVGAIRTSLEAADEYDVQVAIHTDTLNEGGFVENTIAAFDGRTIHTYHTEGAGGGHAPDIIRVASYSNVLPSSTNPTLPFGINSQAELFDMTMVCHNLNPKVATDVAFAESRVRPETIAAENVLHDMGVISIISSDSQAMGRVGESWARSIQTADAMKQGRGKLPEDNADDDNFRVLRYVAKITINPAIAQGISHLVGSVEVGKFADLVLWEPAFFGAKPKFVIKGGMIAWSLMGDPNASLPTPQPVIYRPMYGAFASALHKTCITFASQAGVANGIAERYGLQRLVEPVRNTRAITKNDMVRNAHTPHIEVNPETFAVMVDGVHATVAPIRSVSLGQLYFFS.

A Urease domain is found at 134–572; sequence GGIDAHVHMI…VSLGQLYFFS (439 aa). Ni(2+) contacts are provided by H139, H141, and K222. K222 is subject to N6-carboxylysine. A substrate-binding site is contributed by H224. H251 and H277 together coordinate Ni(2+). Residue H325 is the Proton donor of the active site. Ni(2+) is bound at residue D365.

This sequence belongs to the metallo-dependent hydrolases superfamily. Urease alpha subunit family. In terms of assembly, heterotrimer of UreA (gamma), UreB (beta) and UreC (alpha) subunits. Three heterotrimers associate to form the active enzyme. Requires Ni cation as cofactor. Post-translationally, carboxylation allows a single lysine to coordinate two nickel ions.

It is found in the cytoplasm. The catalysed reaction is urea + 2 H2O + H(+) = hydrogencarbonate + 2 NH4(+). The protein operates within nitrogen metabolism; urea degradation; CO(2) and NH(3) from urea (urease route): step 1/1. The sequence is that of Urease subunit alpha from Laribacter hongkongensis (strain HLHK9).